We begin with the raw amino-acid sequence, 85 residues long: MSDGKKTKTTVNIYGQHFTIIGEESKAHMRHVAGVVDDKMREINEKNPYLDINKLAVLTAVNVVHDYMKLQEKYEILERQLKEKE.

Positions 59-85 form a coiled coil; sequence TAVNVVHDYMKLQEKYEILERQLKEKE.

This sequence belongs to the ZapA family. Type 2 subfamily. In terms of assembly, homodimer. Interacts with FtsZ.

It is found in the cytoplasm. Its function is as follows. Activator of cell division through the inhibition of FtsZ GTPase activity, therefore promoting FtsZ assembly into bundles of protofilaments necessary for the formation of the division Z ring. It is recruited early at mid-cell but it is not essential for cell division. The polypeptide is Cell division protein ZapA (Bacillus velezensis (strain DSM 23117 / BGSC 10A6 / LMG 26770 / FZB42) (Bacillus amyloliquefaciens subsp. plantarum)).